The sequence spans 130 residues: Small ribosomal subunit protein uS9 (130 aa).

The interval 109-130 (RMKERKKYGLKKARRAPQFSKR) is disordered. The segment covering 111 to 130 (KERKKYGLKKARRAPQFSKR) has biased composition (basic residues).

The protein belongs to the universal ribosomal protein uS9 family.

The protein is Small ribosomal subunit protein uS9 of Clostridium kluyveri (strain NBRC 12016).